We begin with the raw amino-acid sequence, 99 residues long: Beta-2-microglobulin (99 aa).

An Ig-like C1-type domain is found at 5–92; it reads PNVQVYSRHP…KHVTLKEPMT (88 aa). The cysteines at positions 25 and 80 are disulfide-linked.

Belongs to the beta-2-microglobulin family. In terms of assembly, heterodimer of an alpha chain and a beta chain. Beta-2-microglobulin is the beta-chain of major histocompatibility complex class I molecules.

The protein localises to the secreted. Component of the class I major histocompatibility complex (MHC). Involved in the presentation of peptide antigens to the immune system. In Oryctolagus cuniculus (Rabbit), this protein is Beta-2-microglobulin (B2M).